The primary structure comprises 49 residues: Osteocalcin (49 aa).

One can recognise a Gla domain in the interval 1–47; it reads YLYQWLGAPAPYPDPLEPKREVCELNPDCDELADHIGFQEAYRRFYG. Position 9 is a 4-hydroxyproline (P9). E17, E21, E24, and D30 together coordinate Ca(2+). 3 positions are modified to 4-carboxyglutamate: E17, E21, and E24. C23 and C29 are joined by a disulfide.

The protein belongs to the osteocalcin/matrix Gla protein family. Post-translationally, gamma-carboxyglutamate residues are formed by vitamin K dependent carboxylation by GGCX. These residues are essential for the binding of calcium. Decarboxylation promotes the hormone activity.

The protein resides in the secreted. The carboxylated form is one of the main organic components of the bone matrix, which constitutes 1-2% of the total bone protein: it acts as a negative regulator of bone formation and is required to limit bone formation without impairing bone resorption or mineralization. The carboxylated form binds strongly to apatite and calcium. Its function is as follows. The uncarboxylated form acts as a hormone secreted by osteoblasts, which regulates different cellular processes, such as energy metabolism, male fertility and brain development. Regulates of energy metabolism by acting as a hormone favoring pancreatic beta-cell proliferation, insulin secretion and sensitivity and energy expenditure. Uncarboxylated osteocalcin hormone also promotes testosterone production in the testes: acts as a ligand for G protein-coupled receptor GPRC6A at the surface of Leydig cells, initiating a signaling response that promotes the expression of enzymes required for testosterone synthesis in a CREB-dependent manner. Also acts as a regulator of brain development: osteocalcin hormone crosses the blood-brain barrier and acts as a ligand for GPR158 on neurons, initiating a signaling response that prevents neuronal apoptosis in the hippocampus, favors the synthesis of all monoamine neurotransmitters and inhibits that of gamma-aminobutyric acid (GABA). Osteocalcin also crosses the placenta during pregnancy and maternal osteocalcin is required for fetal brain development. In Macaca fascicularis (Crab-eating macaque), this protein is Osteocalcin (BGLAP).